The sequence spans 96 residues: Alpha-elapitoxin-Al2b (96 aa).

A signal peptide spans 1–21 (MKTLLLTLVVVTIVCLDFGGG). 5 disulfide bridges follow: C24-C41, C34-C62, C47-C51, C66-C77, and C78-C83.

This sequence belongs to the three-finger toxin family. Long-chain subfamily. Type II alpha-neurotoxin sub-subfamily. In terms of tissue distribution, expressed by the venom gland.

Its subcellular location is the secreted. Potent long-chain postsynaptic neurotoxin. Pseudo-irreversibly inhibits the nicotinic acetylcholine receptor through competitive antagonism. In Austrelaps labialis (Pygmy copperhead), this protein is Alpha-elapitoxin-Al2b.